The following is a 65-amino-acid chain: MSNQNIPQLSEYQTSVSQVAVTPPPKPKTPQIFEYQTSDSIVNNPRPFYNSDLEFDDIDMYLLPN.

The segment covering 1-20 (MSNQNIPQLSEYQTSVSQVA) has biased composition (polar residues). The interval 1–32 (MSNQNIPQLSEYQTSVSQVAVTPPPKPKTPQI) is disordered.

This is 7 kDa A-type inclusion protein from Bos taurus (Bovine).